Reading from the N-terminus, the 486-residue chain is Scarecrow-like protein 15 (486 aa).

The tract at residues 1–28 is disordered; sequence MKIPASSPQDTTNNNNNTNSTDSNHLSM. Over residues 10–24 the composition is skewed to low complexity; it reads DTTNNNNNTNSTDSN. The GRAS domain occupies 113 to 485; sequence DSVDNGGFDF…RALVATSAWR (373 aa). Residues 120–179 are leucine repeat I (LRI); that stretch reads FDFIEDLIRVVDCVESDELQLAQVVLSRLNQRLRSPAGRPLQRAAFYFKEALGSFLTGSN. A VHIID region spans residues 198–266; sequence IKEYSGISPI…VSGGFLRVTA (69 aa). Positions 232–236 match the VHIID motif; it reads VHVVD. Residues 278-310 are leucine repeat II (LRII); that stretch reads LVKENLTQFAAEMKIRFQIEFVLMKTFEMLSFK. The interval 320–410 is PFYRE; it reads TVVLISPAIF…AFVLRPKISA (91 aa). The segment at 413–485 is SAW; it reads ETAADRRHTG…RALVATSAWR (73 aa).

It belongs to the GRAS family. As to expression, expressed in seedlings, roots, leaves and flowers.

The protein resides in the nucleus. In terms of biological role, probable transcription factor involved in plant development. The chain is Scarecrow-like protein 15 (SCL15) from Arabidopsis thaliana (Mouse-ear cress).